Reading from the N-terminus, the 387-residue chain is Gamma-butyrobetaine dioxygenase (387 aa).

The Zn(2+) site is built by cysteine 38, cysteine 40, cysteine 43, and histidine 82. Histidine 202, aspartate 204, and histidine 347 together coordinate Fe cation. Serine 351 is subject to Phosphoserine.

Belongs to the gamma-BBH/TMLD family. Fe(2+) is required as a cofactor. It depends on L-ascorbate as a cofactor. Expressed in the liver and in some extend in the testis and the epididymis.

It localises to the cytoplasm. It catalyses the reaction 4-(trimethylamino)butanoate + 2-oxoglutarate + O2 = carnitine + succinate + CO2. The protein operates within amine and polyamine biosynthesis; carnitine biosynthesis. Its function is as follows. Catalyzes the formation of L-carnitine from gamma-butyrobetaine. This chain is Gamma-butyrobetaine dioxygenase (Bbox1), found in Rattus norvegicus (Rat).